The primary structure comprises 141 residues: Large ribosomal subunit protein uL11 (141 aa).

This sequence belongs to the universal ribosomal protein uL11 family. In terms of assembly, part of the ribosomal stalk of the 50S ribosomal subunit. Interacts with L10 and the large rRNA to form the base of the stalk. L10 forms an elongated spine to which L12 dimers bind in a sequential fashion forming a multimeric L10(L12)X complex. One or more lysine residues are methylated.

Its function is as follows. Forms part of the ribosomal stalk which helps the ribosome interact with GTP-bound translation factors. The sequence is that of Large ribosomal subunit protein uL11 from Nautilia profundicola (strain ATCC BAA-1463 / DSM 18972 / AmH).